Consider the following 368-residue polypeptide: MTRGFAPILPVEFHKMGSFRRPRPRFMSSPVLSDLPRFQAARQALQLSSSSAWNSVQTAVINVFKGGGLQSNELYALNENIRRLLKSELGSFITDYFQNQLLAKGLFFVEEKIKLCEGENRIEVLAEVWDHFFTETLPTLQAIFYPVQGQELTIRQISLLGFRDLVLLKVKLGDLLLLAQSKLPSSIVQMLLILQSVHEPTGPSESYLQLEELVKQVVSPFLGISGDRSFSGPTYTLARRHSRVRPKVTVLNYASPITAVSRPLNEMVLTPLTEQEGEAYLEKCGSVRRHTVANAHSDIQLLAMATMMHSGLGEEASSENKCLLLPPSFPPPHRQCSSEPNITDNPDGLEEGARGSQEGSELNCASLS.

Position 28 is a phosphoserine (Ser28). The disordered stretch occupies residues 327 to 368 (PSFPPPHRQCSSEPNITDNPDGLEEGARGSQEGSELNCASLS). Composition is skewed to polar residues over residues 335-344 (QCSSEPNITD) and 357-368 (QEGSELNCASLS).

This sequence belongs to the PROTOR family. In terms of assembly, interacts with the mammalian target of rapamycin complex 2 (mTORC2) which contains MTOR, MLST8, PRR5, RICTOR, MAPKAP1 and DEPTOR. Interacts with RFFL. Interacts (via C-terminus) with ZFP36 (via C-terminus); this interaction may accelerate ZFP36-mediated mRNA decay during stress. Interacts with RICTOR. In terms of processing, ubiquitinated. Ubiquitination by RFFL promotes proteasomal degradation of PRR5L thereby modifying the substrate-specific activity of the mTORC2 complex. Ubiquitination by RFFL is stimulated by LPA/lysophosphatidic acid.

Its function is as follows. Associates with the mTORC2 complex that regulates cellular processes including survival and organization of the cytoskeleton. Regulates the activity of the mTORC2 complex in a substrate-specific manner preventing for instance the specific phosphorylation of PKCs and thereby controlling cell migration. Plays a role in the stimulation of ZFP36-mediated mRNA decay of several ZFP36-associated mRNAs, such as TNF-alpha and GM-CSF, in response to stress. Required for ZFP36 localization to cytoplasmic stress granule (SG) and P-body (PB) in response to stress. In Homo sapiens (Human), this protein is Proline-rich protein 5-like (PRR5L).